The sequence spans 249 residues: Adenosylcobinamide-GDP ribazoletransferase (249 aa).

Helical transmembrane passes span 36-56 (LVGF…HSIG), 57-77 (LNLA…GGLH), 106-126 (VGAM…AFLF), 133-153 (KLTA…LAIT), 188-208 (LWLF…ITWL), and 226-246 (GALG…GQQI).

It belongs to the CobS family. The cofactor is Mg(2+).

The protein resides in the cell membrane. It carries out the reaction alpha-ribazole + adenosylcob(III)inamide-GDP = adenosylcob(III)alamin + GMP + H(+). The catalysed reaction is alpha-ribazole 5'-phosphate + adenosylcob(III)inamide-GDP = adenosylcob(III)alamin 5'-phosphate + GMP + H(+). It functions in the pathway cofactor biosynthesis; adenosylcobalamin biosynthesis; adenosylcobalamin from cob(II)yrinate a,c-diamide: step 7/7. In terms of biological role, joins adenosylcobinamide-GDP and alpha-ribazole to generate adenosylcobalamin (Ado-cobalamin). Also synthesizes adenosylcobalamin 5'-phosphate from adenosylcobinamide-GDP and alpha-ribazole 5'-phosphate. The polypeptide is Adenosylcobinamide-GDP ribazoletransferase (Desulforamulus reducens (strain ATCC BAA-1160 / DSM 100696 / MI-1) (Desulfotomaculum reducens)).